Here is a 307-residue protein sequence, read N- to C-terminus: RHOMBOID-like protein 6, mitochondrial (307 aa).

Residues 1–62 (MRSRDMERGR…DCVAKLLRRF (62 aa)) constitute a mitochondrion transit peptide. A run of 6 helical transmembrane segments spans residues 105 to 125 (WLHA…IFGI), 136 to 156 (IGLI…LFLQ), 159 to 179 (ISVG…SELL), 191 to 211 (ALLS…LPWV), 214 to 234 (FAHI…LMQP), and 262 to 282 (LFFV…VMLF). Ser-164 acts as the Nucleophile in catalysis. Catalysis depends on His-216, which acts as the Charge relay system.

This sequence belongs to the peptidase S54 family.

The protein localises to the mitochondrion membrane. The enzyme catalyses Cleaves type-1 transmembrane domains using a catalytic dyad composed of serine and histidine that are contributed by different transmembrane domains.. Probable rhomboid-type serine protease that catalyzes intramembrane proteolysis. Might be involved in response to abiotic stimuli. The sequence is that of RHOMBOID-like protein 6, mitochondrial from Arabidopsis thaliana (Mouse-ear cress).